Consider the following 95-residue polypeptide: Large ribosomal subunit protein uL23 (95 aa).

It belongs to the universal ribosomal protein uL23 family. As to quaternary structure, part of the 50S ribosomal subunit. Contacts protein L29, and trigger factor when it is bound to the ribosome.

One of the early assembly proteins it binds 23S rRNA. One of the proteins that surrounds the polypeptide exit tunnel on the outside of the ribosome. Forms the main docking site for trigger factor binding to the ribosome. This chain is Large ribosomal subunit protein uL23, found in Desulfitobacterium hafniense (strain Y51).